We begin with the raw amino-acid sequence, 357 residues long: Guanine nucleotide-binding protein alpha-1 subunit (357 aa).

Residue Gly2 is the site of N-myristoyl glycine attachment. Cys4 carries S-palmitoyl cysteine lipidation. The G-alpha domain occupies 32–357 (NIIKLLLLGA…STKLKGCGLY (326 aa)). The G1 motif stretch occupies residues 35–48 (KLLLLGAGESGKST). Residues Glu43, Ser44, Gly45, Lys46, Ser47, Thr48, Asp151, Leu176, Thr182, Gly204, Asn270, Lys271, Asp273, and Ala329 each coordinate GTP. Residue Ser47 coordinates Mg(2+). Residues 174 to 182 (DILHTRVPT) are G2 motif. Thr182 is a Mg(2+) binding site. The tract at residues 197–206 (FRVFDVGGQR) is G3 motif. The interval 266–273 (ILFLNKID) is G4 motif. The tract at residues 327-332 (TCATDT) is G5 motif.

The protein belongs to the G-alpha family. As to quaternary structure, g proteins are composed of 3 units; alpha, beta and gamma. The alpha chain contains the guanine nucleotide binding site. The cofactor is Mg(2+).

Its function is as follows. Guanine nucleotide-binding proteins (G proteins) are involved as modulators or transducers in various transmembrane signaling systems. In Caenorhabditis elegans, this protein is Guanine nucleotide-binding protein alpha-1 subunit (gpa-1).